Reading from the N-terminus, the 386-residue chain is Leupaxin (386 aa).

N-acetylmethionine is present on M1. Residues E3–T15 carry the LD motif 1 motif. The residue at position 19 (S19) is a Phosphoserine. Positions S19 to N52 are disordered. Y22 is modified (phosphotyrosine). The span at Y22–N52 shows a compositional bias: polar residues. Residue S54 is modified to Phosphoserine. Position 62 is a phosphotyrosine (Y62). Short sequence motifs (LD motif) lie at residues N70–V82 and Q92–M103. Y72 is subject to Phosphotyrosine; by LYN. The residue at position 81 (S81) is a Phosphoserine. LIM zinc-binding domains are found at residues G150–S208, P209–S267, P268–G326, and T327–Q386.

This sequence belongs to the paxillin family. As to quaternary structure, interacts with unphosphorylated ITGA4. Interacts with AR and SRF. Interacts with PTK2B/PYK2, PTPN22 and PTPN12. Interacts (via LD motif 3) with LYN and the interaction is induced upon B-cell antigen receptor (BCR) activation. Interacts (via LD motif 3) with PTK2/FAK. Post-translationally, phosphorylated on tyrosine residues. Phosphorylation on Tyr-72 is important for its inhibitory function. Bombesin stimulates phosphorylation on Tyr-22, Tyr-62 and Tyr-72. Expressed in osteoclasts (at protein level). Highly expressed in vascular smooth muscle.

The protein localises to the cytoplasm. The protein resides in the cell junction. It is found in the focal adhesion. Its subcellular location is the nucleus. It localises to the perinuclear region. The protein localises to the cell projection. The protein resides in the podosome. It is found in the cell membrane. In terms of biological role, transcriptional coactivator for androgen receptor (AR) and serum response factor (SRF). Contributes to the regulation of cell adhesion, spreading and cell migration and acts as a negative regulator in integrin-mediated cell adhesion events. Suppresses the integrin-induced tyrosine phosphorylation of paxillin (PXN). May play a critical role as an adapter protein in the formation of the adhesion zone in osteoclasts. Negatively regulates B-cell antigen receptor (BCR) signaling. The protein is Leupaxin (Lpxn) of Mus musculus (Mouse).